Reading from the N-terminus, the 564-residue chain is Sulfite reductase [NADPH] hemoprotein beta-component 1 (564 aa).

[4Fe-4S] cluster-binding residues include Cys426, Cys432, Cys471, and Cys475. Cys475 provides a ligand contact to siroheme.

Belongs to the nitrite and sulfite reductase 4Fe-4S domain family. As to quaternary structure, alpha(8)-beta(8). The alpha component is a flavoprotein, the beta component is a hemoprotein. Siroheme serves as cofactor. [4Fe-4S] cluster is required as a cofactor.

It catalyses the reaction hydrogen sulfide + 3 NADP(+) + 3 H2O = sulfite + 3 NADPH + 4 H(+). It participates in sulfur metabolism; hydrogen sulfide biosynthesis; hydrogen sulfide from sulfite (NADPH route): step 1/1. Component of the sulfite reductase complex that catalyzes the 6-electron reduction of sulfite to sulfide. This is one of several activities required for the biosynthesis of L-cysteine from sulfate. In Pectobacterium carotovorum subsp. carotovorum (strain PC1), this protein is Sulfite reductase [NADPH] hemoprotein beta-component 1.